The following is a 619-amino-acid chain: Telomere repeat-binding protein 3 (619 aa).

Positions 324 to 403 (VKLSIKSFRI…LDNLGFTLEP (80 aa)) constitute a Ubiquitin-like domain. In terms of domain architecture, HTH myb-type spans 504 to 563 (AQRRTRRPFSVTEVEALVQAVEELGTGRWRDVKLRAFEDADHRTYVDLKDKWKTLVHTAS). The segment at residues 532-559 (WRDVKLRAFEDADHRTYVDLKDKWKTLV) is a DNA-binding region (H-T-H motif). Positions 593 to 619 (QGKHQARGASKDPDMNRGGAFESGVSV) are disordered.

Homodimer and heterodimer with TRP1. As to expression, expressed ubiquitously. Highest expression in flowers and roots.

It localises to the nucleus. In terms of biological role, binds specifically to the plant telomeric double-stranded DNA sequences. At least 2 repeats of telomeric sequences are required for binding. Induces DNA bending. This is Telomere repeat-binding protein 3 (TRP3) from Arabidopsis thaliana (Mouse-ear cress).